A 209-amino-acid chain; its full sequence is Protein bli-3 (209 aa).

A compositionally biased stretch (polar residues) spans 1–11 (MSGQGFSNADT). The tract at residues 1 to 24 (MSGQGFSNADTGNKPADPYKQANL) is disordered.

This chain is Protein bli-3 (bli-3), found in Neurospora crassa (strain ATCC 24698 / 74-OR23-1A / CBS 708.71 / DSM 1257 / FGSC 987).